Consider the following 256-residue polypeptide: Imidazole glycerol phosphate synthase subunit HisF (256 aa).

Active-site residues include D12 and D131.

The protein belongs to the HisA/HisF family. As to quaternary structure, heterodimer of HisH and HisF.

The protein localises to the cytoplasm. The enzyme catalyses 5-[(5-phospho-1-deoxy-D-ribulos-1-ylimino)methylamino]-1-(5-phospho-beta-D-ribosyl)imidazole-4-carboxamide + L-glutamine = D-erythro-1-(imidazol-4-yl)glycerol 3-phosphate + 5-amino-1-(5-phospho-beta-D-ribosyl)imidazole-4-carboxamide + L-glutamate + H(+). It functions in the pathway amino-acid biosynthesis; L-histidine biosynthesis; L-histidine from 5-phospho-alpha-D-ribose 1-diphosphate: step 5/9. Functionally, IGPS catalyzes the conversion of PRFAR and glutamine to IGP, AICAR and glutamate. The HisF subunit catalyzes the cyclization activity that produces IGP and AICAR from PRFAR using the ammonia provided by the HisH subunit. This Bifidobacterium adolescentis (strain ATCC 15703 / DSM 20083 / NCTC 11814 / E194a) protein is Imidazole glycerol phosphate synthase subunit HisF.